The sequence spans 227 residues: PKHD-type hydroxylase Dtpsy_0528 (227 aa).

The region spanning 78–178 (TIYPPKFNRY…RVASFFWIES (101 aa)) is the Fe2OG dioxygenase domain. The Fe cation site is built by His-96, Asp-98, and His-159. Arg-169 lines the 2-oxoglutarate pocket.

It depends on Fe(2+) as a cofactor. The cofactor is L-ascorbate.

This Acidovorax ebreus (strain TPSY) (Diaphorobacter sp. (strain TPSY)) protein is PKHD-type hydroxylase Dtpsy_0528.